The primary structure comprises 112 residues: Putative pterin-4-alpha-carbinolamine dehydratase (112 aa).

The segment at Met-1–Ala-30 is disordered.

Belongs to the pterin-4-alpha-carbinolamine dehydratase family.

It carries out the reaction (4aS,6R)-4a-hydroxy-L-erythro-5,6,7,8-tetrahydrobiopterin = (6R)-L-erythro-6,7-dihydrobiopterin + H2O. This Aromatoleum aromaticum (strain DSM 19018 / LMG 30748 / EbN1) (Azoarcus sp. (strain EbN1)) protein is Putative pterin-4-alpha-carbinolamine dehydratase.